The following is an 818-amino-acid chain: H(+)/Cl(-) exchange transporter 3 (818 aa).

Topologically, residues Met-1–Ala-125 are cytoplasmic. Short sequence motifs (di-leucine internalization motif; mediates targeting to late endosome and lysosome membranes) lie at residues Leu-28 to Leu-29, Leu-46 to Leu-47, and Leu-71 to Leu-75. A helical membrane pass occupies residues Trp-126–Ser-163. Residue Asn-177 is glycosylated (N-linked (GlcNAc...) asparagine). The helical transmembrane segment at Met-209 to Phe-232 threads the bilayer. The Selectivity filter part_1 signature appears at Gly-238 to Pro-242. Residue Ser-239 participates in chloride binding. The segment at residues Ile-241 to Leu-248 is an intramembrane region (helical). Transmembrane regions (helical) follow at residues Gly-258–Gly-276 and Glu-282–Pro-301. Residues Gly-280 to Pro-284 carry the Selectivity filter part_2 motif. Intramembrane regions (helical) lie at residues Val-313–Ala-325 and Pro-329–Leu-337. Transmembrane regions (helical) follow at residues Leu-349–Asn-367, Phe-391–Arg-416, and Phe-423–Phe-443. N-linked (GlcNAc...) asparagine glycosylation is found at Asn-451 and Asn-479. The next 2 membrane-spanning stretches (helical) occupy residues Ile-500–Ile-520 and Gly-525–Ala-544. The Selectivity filter part_3 signature appears at Gly-525–Pro-529. Phe-527 is a binding site for chloride. Intramembrane regions (helical) lie at residues Gly-572–Val-586 and Thr-590–Thr-601. Residues Gly-602–Glu-605 constitute an intramembrane region (note=Loop between two helices). A helical transmembrane segment spans residues Tyr-606–Phe-624. The Cytoplasmic portion of the chain corresponds to Gly-625–Asn-818. Residue Tyr-630 coordinates chloride. CBS domains are found at residues Met-658 to Lys-722 and Leu-755 to Pro-812. Residues Tyr-689 to Gly-691 and Thr-796 to Asp-799 each bind ATP.

Belongs to the chloride channel (TC 2.A.49) family. ClC-3/CLCN3 subfamily. Monomer and homodimer. Forms heterodimers with CLCN4. Post-translationally, N-glycosylated. As to expression, abundant in brain, especially in the olfactory bulb, hippocampus, and cerebellum. A moderate expression is seen in the lung, kidney and adrenal gland.

It is found in the lysosome membrane. Its subcellular location is the late endosome membrane. The protein resides in the cell membrane. The protein localises to the early endosome membrane. In terms of biological role, strongly outwardly rectifying, electrogenic H(+)/Cl(-)exchanger which mediates the exchange of chloride ions against protons. The CLC channel family contains both chloride channels and proton-coupled anion transporters that exchange chloride or another anion for protons. The presence of conserved gating glutamate residues is typical for family members that function as antiporters. Its function is as follows. Strongly outwardly rectifying, electrogenic H(+)/Cl(-)exchanger which mediates the exchange of chloride ions against protons. May play an important role in neuronal cell function through regulation of membrane excitability by protein kinase C. It could help neuronal cells to establish short-term memory. The chain is H(+)/Cl(-) exchange transporter 3 (Clcn3) from Rattus norvegicus (Rat).